The following is a 314-amino-acid chain: Malate dehydrogenase (314 aa).

Residues 11–16 (GSGNIG) and Asp-35 contribute to the NAD(+) site. Positions 84 and 90 each coordinate substrate. NAD(+) is bound by residues Asn-97 and 120-122 (ITN). 2 residues coordinate substrate: Asn-122 and Arg-153. His-177 (proton acceptor) is an active-site residue.

The protein belongs to the LDH/MDH superfamily. MDH type 3 family.

The catalysed reaction is (S)-malate + NAD(+) = oxaloacetate + NADH + H(+). Catalyzes the reversible oxidation of malate to oxaloacetate. In Rickettsia canadensis (strain McKiel), this protein is Malate dehydrogenase.